Reading from the N-terminus, the 407-residue chain is uncharacterized protein (407 aa).

Positions 1 to 27 (MRILAMTRAHNAGRTLAATLDSLAVFS) are cleaved as a signal peptide.

This is an uncharacterized protein from Mycobacterium bovis (strain ATCC BAA-935 / AF2122/97).